Here is a 333-residue protein sequence, read N- to C-terminus: Holliday junction branch migration complex subunit RuvB (333 aa).

The tract at residues M1 to Y182 is large ATPase domain (RuvB-L). ATP-binding positions include L21, R22, G63, K66, T67, T68, E129 to F131, R172, Y182, and R219. T67 is a Mg(2+) binding site. Residues T183–Q253 form a small ATPAse domain (RuvB-S) region. Residues K256–V333 form a head domain (RuvB-H) region. Residues R311 and R316 each coordinate DNA.

This sequence belongs to the RuvB family. In terms of assembly, homohexamer. Forms an RuvA(8)-RuvB(12)-Holliday junction (HJ) complex. HJ DNA is sandwiched between 2 RuvA tetramers; dsDNA enters through RuvA and exits via RuvB. An RuvB hexamer assembles on each DNA strand where it exits the tetramer. Each RuvB hexamer is contacted by two RuvA subunits (via domain III) on 2 adjacent RuvB subunits; this complex drives branch migration. In the full resolvosome a probable DNA-RuvA(4)-RuvB(12)-RuvC(2) complex forms which resolves the HJ.

Its subcellular location is the cytoplasm. It catalyses the reaction ATP + H2O = ADP + phosphate + H(+). Functionally, the RuvA-RuvB-RuvC complex processes Holliday junction (HJ) DNA during genetic recombination and DNA repair, while the RuvA-RuvB complex plays an important role in the rescue of blocked DNA replication forks via replication fork reversal (RFR). RuvA specifically binds to HJ cruciform DNA, conferring on it an open structure. The RuvB hexamer acts as an ATP-dependent pump, pulling dsDNA into and through the RuvAB complex. RuvB forms 2 homohexamers on either side of HJ DNA bound by 1 or 2 RuvA tetramers; 4 subunits per hexamer contact DNA at a time. Coordinated motions by a converter formed by DNA-disengaged RuvB subunits stimulates ATP hydrolysis and nucleotide exchange. Immobilization of the converter enables RuvB to convert the ATP-contained energy into a lever motion, pulling 2 nucleotides of DNA out of the RuvA tetramer per ATP hydrolyzed, thus driving DNA branch migration. The RuvB motors rotate together with the DNA substrate, which together with the progressing nucleotide cycle form the mechanistic basis for DNA recombination by continuous HJ branch migration. Branch migration allows RuvC to scan DNA until it finds its consensus sequence, where it cleaves and resolves cruciform DNA. The chain is Holliday junction branch migration complex subunit RuvB from Bacillus anthracis (strain A0248).